The sequence spans 288 residues: Pyruvate synthase subunit PorB (288 aa).

Positions 16, 19, and 44 each coordinate [4Fe-4S] cluster. Positions 137 to 148 (STPYGASTTTSP) are enriched in polar residues. The disordered stretch occupies residues 137-159 (STPYGASTTTSPHGKESFGEDRP). Basic and acidic residues predominate over residues 149-159 (HGKESFGEDRP). A [4Fe-4S] cluster-binding site is contributed by C208.

As to quaternary structure, heterotetramer of one alpha, one beta, one delta and one gamma chain. [4Fe-4S] cluster is required as a cofactor.

The catalysed reaction is 2 oxidized [2Fe-2S]-[ferredoxin] + pyruvate + CoA = 2 reduced [2Fe-2S]-[ferredoxin] + acetyl-CoA + CO2 + H(+). In Methanothermobacter marburgensis (strain ATCC BAA-927 / DSM 2133 / JCM 14651 / NBRC 100331 / OCM 82 / Marburg) (Methanobacterium thermoautotrophicum), this protein is Pyruvate synthase subunit PorB (porB).